The sequence spans 322 residues: MDTSSINAQSIFDDNAAMLKLSWLTGHEGWERGFSSESVANATSSADLVGHLNLIHPNRIQVLGDAEIDYYKRQTDEDRSRHMAELIALEPPFLVVAGGVAAPPELVLRCTRSSTPLFTTPMSAAAVIDSLRLYMSRILAPRATLHGVFLDILGMGVLLTGDSGLGKSELGLELISRGHGLVADDAVDFVRLGPDFVEGRCPPLLQNLLEVRGLGLLDIKTIFGETAVRRKMKLKLIVQLVRRPDGEFQRLPLESQTVDVLGLPISKVTIQVAAGRNLAVLVEAAVRNTILQLRGIDTLRDFMDRQRLAMQDPDSQFPGKLI.

Active-site residues include H146 and K167. 161–168 (GDSGLGKS) provides a ligand contact to ATP. S168 contacts Mg(2+). The Proton acceptor; for phosphorylation activity. Proton donor; for dephosphorylation activity role is filled by D185. The segment at 209-218 (LEVRGLGLLD) is important for the catalytic mechanism of both phosphorylation and dephosphorylation. Residue E210 coordinates Mg(2+). R250 is an active-site residue. The tract at residues 271 to 276 (QVAAGR) is important for the catalytic mechanism of dephosphorylation.

This sequence belongs to the HPrK/P family. In terms of assembly, homohexamer. Mg(2+) serves as cofactor.

It carries out the reaction [HPr protein]-L-serine + ATP = [HPr protein]-O-phospho-L-serine + ADP + H(+). The catalysed reaction is [HPr protein]-O-phospho-L-serine + phosphate + H(+) = [HPr protein]-L-serine + diphosphate. Catalyzes the ATP- as well as the pyrophosphate-dependent phosphorylation of a specific serine residue in HPr, a phosphocarrier protein of the phosphoenolpyruvate-dependent sugar phosphotransferase system (PTS). HprK/P also catalyzes the pyrophosphate-producing, inorganic phosphate-dependent dephosphorylation (phosphorolysis) of seryl-phosphorylated HPr (P-Ser-HPr). The polypeptide is HPr kinase/phosphorylase (Paraburkholderia phytofirmans (strain DSM 17436 / LMG 22146 / PsJN) (Burkholderia phytofirmans)).